A 214-amino-acid polypeptide reads, in one-letter code: ATP phosphoribosyltransferase (214 aa).

The protein belongs to the ATP phosphoribosyltransferase family. Short subfamily. In terms of assembly, heteromultimer composed of HisG and HisZ subunits.

Its subcellular location is the cytoplasm. It catalyses the reaction 1-(5-phospho-beta-D-ribosyl)-ATP + diphosphate = 5-phospho-alpha-D-ribose 1-diphosphate + ATP. Its pathway is amino-acid biosynthesis; L-histidine biosynthesis; L-histidine from 5-phospho-alpha-D-ribose 1-diphosphate: step 1/9. Functionally, catalyzes the condensation of ATP and 5-phosphoribose 1-diphosphate to form N'-(5'-phosphoribosyl)-ATP (PR-ATP). Has a crucial role in the pathway because the rate of histidine biosynthesis seems to be controlled primarily by regulation of HisG enzymatic activity. The polypeptide is ATP phosphoribosyltransferase (hisG) (Nostoc sp. (strain PCC 7120 / SAG 25.82 / UTEX 2576)).